The primary structure comprises 874 residues: Translation initiation factor IF-2 (874 aa).

The disordered stretch occupies residues 1–289 (MKIKNAQLTK…KHYDEHSVQR (289 aa)). Basic and acidic residues predominate over residues 31-48 (SSSEKPTTKVPEKVAKEK). Residues 81–104 (RSSFASEDSTIPSPVSVDTESTAF) are compositionally biased toward polar residues. Over residues 105 to 118 (SPPVVEEVVSPLES) the composition is skewed to low complexity. 2 stretches are compositionally biased toward basic and acidic residues: residues 144–158 (PPKK…KEPP) and 186–198 (PKKE…KERT). A compositionally biased stretch (polar residues) spans 199–211 (GTVQTKPQQSSEV). The span at 228 to 260 (YRRDTSKRPGSDFRDRSKKDDSPKAFTGRDRYG) shows a compositional bias: basic and acidic residues. Residues 271 to 280 (RKKRVQKTKK) are compositionally biased toward basic residues. The region spanning 380-549 (IRPPIVAFMG…ALQAEVLELK (170 aa)) is the tr-type G domain. Residues 389–396 (GHVDHGKT) are G1. 389–396 (GHVDHGKT) lines the GTP pocket. The interval 414-418 (AITQH) is G2. The segment at 435–438 (DTPG) is G3. Residues 435-439 (DTPGH) and 489-492 (NKCD) each bind GTP. Residues 489-492 (NKCD) form a G4 region. The G5 stretch occupies residues 525 to 527 (SAK).

The protein belongs to the TRAFAC class translation factor GTPase superfamily. Classic translation factor GTPase family. IF-2 subfamily.

It is found in the cytoplasm. In terms of biological role, one of the essential components for the initiation of protein synthesis. Protects formylmethionyl-tRNA from spontaneous hydrolysis and promotes its binding to the 30S ribosomal subunits. Also involved in the hydrolysis of GTP during the formation of the 70S ribosomal complex. In Chlamydia abortus (strain DSM 27085 / S26/3) (Chlamydophila abortus), this protein is Translation initiation factor IF-2.